The sequence spans 90 residues: MKTLLLTLVLVTIMCLDLGYTIRCFITPDVTSTDCPNGHVCYTKTWCDGFCSSRGRRVELGCAATCPTVKPGVDIQCCSTDNCNPFPTRP.

A signal peptide spans 1–21 (MKTLLLTLVLVTIMCLDLGYT). Disulfide bonds link Cys-24/Cys-41, Cys-35/Cys-62, Cys-47/Cys-51, Cys-66/Cys-77, and Cys-78/Cys-83.

The protein belongs to the three-finger toxin family. Long-chain subfamily. Type II alpha-neurotoxin sub-subfamily. Expressed by the venom gland.

It is found in the secreted. Its function is as follows. Binds with high affinity to muscular (alpha-1/CHRNA1) and neuronal (alpha-7/CHRNA7) nicotinic acetylcholine receptor (nAChR) and inhibits acetylcholine from binding to the receptor, thereby impairing neuromuscular and neuronal transmission. This Naja sputatrix (Malayan spitting cobra) protein is Long neurotoxin 7.